The sequence spans 77 residues: Conotoxin VnMEKL-0111 (77 aa).

The N-terminal stretch at 1–19 (MEKLTILLLVAAVLMSTQA) is a signal peptide. Residues 20-46 (LIQHDGEKSQKAKMKFLTARTLSAKTR) constitute a propeptide that is removed on maturation. Intrachain disulfides connect Cys50-Cys66, Cys57-Cys71, and Cys65-Cys75.

It belongs to the conotoxin O2 superfamily. Expressed by the venom duct.

It localises to the secreted. The sequence is that of Conotoxin VnMEKL-0111 from Conus ventricosus (Mediterranean cone).